The following is a 101-amino-acid chain: Small ribosomal subunit protein uS14 (101 aa).

It belongs to the universal ribosomal protein uS14 family. In terms of assembly, part of the 30S ribosomal subunit. Contacts proteins S3 and S10.

Its function is as follows. Binds 16S rRNA, required for the assembly of 30S particles and may also be responsible for determining the conformation of the 16S rRNA at the A site. The chain is Small ribosomal subunit protein uS14 from Pasteurella multocida (strain Pm70).